Reading from the N-terminus, the 2164-residue chain is MGAQVSRQNVGTHSTQNSVSNGSSLNYFNINYFKDAASSGASRLDFSQDPSKFTDPVKDVLEKGIPTLQSPTVEACGYSDRLIQITRGDSTITSQDTANAVVAYGVWPSYLTPDDATAIDKPTQPDTSSNRFYTLDSRSWTSASSGWWWKLPDALKNMGIFGENMFYHFLGRSGYTIHVQCNSSKFHQGLLIVAAIPEHQLASATSGNVSVGYNHTHPGEQGREVVPSRTSSDNKRPSDDSWLNFDGTLLGNLPIYPHQYINLRTNNSATLILPYVNAVPMDSMLRHNNWSLVIIPICPLQVQPGGTQSIPITVSISPMFSEFSGPRSKVVFSTTQGLPVMLTPGSGQFLTTDDTQSPSAFPYFHPTKEIFIPGQVRNLIEMCQVDTLIPVNNTQENVRSVNMYTVDLRTQVDLAKEVFSIPVDIASQPLATTLIGELASYYTHWTGSLRFSFMFCGSASSTLKLLIAYTPPGVGKPKSRREAMLGTHLVWDVGLQSTASLVVPWVSASHFRFTTPDTYSSAGYITCWYQTNFVVPDSTPDNAKMVCMVSACKDFCLRLARDTNLHTQEGVLTQNPVENYIDSVLNEVLVVPNIQPSTSVSSHAAPALDAAETGHTSSVQPEDMIETRYVITDQTRDETSIESFLGRSGCIAMIEFNTSSDKTEHDKIGKGFKTWKVSLQEMAQIRRKYELFTYTRFDSEITIVTAAAAQGNDSGHIVLQFMYVPPGAPVPEKRDDYTWQSGTNASVFWQEGQPYPRFTIPFMSIASAYYMFYDGYDGDSAASKYGSVVTNDMGTICVRIVTSNQKHDSNIVCRIYHKAKHIKAWCPRPPRAVAYQHTHSTNYIPSNGEATTQIKTRPDVFTVTNVGPSSMFVHVGNLIYRNLHLFNSDLDDSILVSYSSDLIIYRTNTEGNDVIPNCDCTECTYYCHHKDRYFPIRVTAHDWYEIQESEYYPKHIQYNLLIGEGPCEPGDCGGKLLCKHGVIGMITAGGEGHVAFIDLRKFQCAEEQGLSDYVEHLGQVFGVGFVDSIKQQVNFINPTSKIGSKVIKWLLRIVSAMIIMVRNSSDPQTVIATLTLLGCSGSPWRFLKEKLCAWLQLSYVHKQSDSWLKKFTEACNAARGLEWIGQKISKFIDWIKSMLPQAQLKIDYLTKLKQLNLLEKQIETIRLAPASVQEKIFIEINTLHDLSLKFLPLYASEARRIKNLYIKCSNVIKGGKRNEPVAVLIHGSPGTGKSLATSVLARMLTVETDIYSLPPDPKYFDGYDQQSVVIMDDIMQNPSGEDMTLFCQMVSSVPFIPPMADLPDKGKPFTSKFVLASTNHTLLTPPTVSSLPAMARRFYFDLDIQVKKEYLLDGKLDIAKSFRPCDVNIKIGNAKCCPFICGKAVEFKDRNSCTTLSLSQLYSHIKEEDRRRSSAAQAMEAIFQGIDLQSPPPPAIADLLRSVKTPEIIKYCQDNNWIVPAECSIERDLGIANMTIGIIANVVSIVGVIYIIYKLFCTLQGPYSGEPKPKSRAPERRVVTQGPEEEFGRSLLKHNCCVVTTDKGKFTGLGIYDQVMVLPTHSDPGSEILVDGVKVKVSDSYDLHNHEGVKLEITVVKLIRNEKFKDIRKYLPSREDDYPACNLALLANQDEPTIISVGDAVSYGNILLSGTNTARMIKYHYPTKAGYCGGVLYKVGSILGIHVGGNGRDGFSAMLLKSYFGETQGLITKELPVSVKNLPSVHVSSKTRLQPSVFHDVFPGTKEPAVLSSNDPRLETDFDSALFSKYKGNPACQVTPHMKIAVAHYAAQLSTLDINPQPLSLEESVFGIEGLEALDLNTSAGFPYVSLGIKKKDLIDKKTKDITKLRKAIDEYGIDLPMVTFLKDELRKKEKIKDGKTRVIEANSVNDTVLFRSVFGNLFSAFHKNPGIVTGSAVGCDPEVFWSTIPLMLDGECLMAFDYSNYDGSLHPVWFKCLSMLLEDIGFSSQLINQICNSKHIYKSKYYEVEGGMPSGCAGTSIFNTIINNIIIRTLVLDAYKNIDLDKLKILAYGDDVIFSYNFKLDMAVLAKEGEKYGLTITPADKSDVFQELTYKNVTFLKRGFRADERHSFLIHPTFPVAEIHDSIRWTKNPSCMQEHVLSLCHLMWHNGRHAYQEFIKGIRSVSAGRALYIPAYEVLEHEWYEKF.

Gly-2 carries N-myristoyl glycine; by host lipidation. The Cytoplasmic portion of the chain corresponds to 2–1477 (GAQVSRQNVG…DLGIANMTIG (1476 aa)). The segment at 208–239 (NVSVGYNHTHPGEQGREVVPSRTSSDNKRPSD) is disordered. The segment at 572–588 (LTQNPVENYIDSVLNEV) is amphipathic alpha-helix. Active-site for protease 2A activity residues include His-884 and Asp-901. Positions 918 and 920 each coordinate Zn(2+). Cys-972 (for protease 2A activity) is an active-site residue. 2 residues coordinate Zn(2+): Cys-978 and His-980. The interval 1104-1173 (SDSWLKKFTE…TIRLAPASVQ (70 aa)) is membrane-binding. Residues 1104–1237 (SDSWLKKFTE…SPGTGKSLAT (134 aa)) form an oligomerization region. Residues 1125–1129 (GQKIS) form an RNA-binding region. In terms of domain architecture, SF3 helicase spans 1197–1357 (EARRIKNLYI…KEYLLDGKLD (161 aa)). 1227–1234 (GSPGTGKS) contributes to the ATP binding site. The Zn(2+) site is built by Cys-1365, Cys-1376, and Cys-1381. The segment at 1365–1381 (CDVNIKIGNAKCCPFIC) adopts a C4-type; degenerate zinc-finger fold. Residues 1408–1415 (EDRRRSSA) are RNA-binding. The tract at residues 1419-1424 (MEAIFQ) is oligomerization. An intramembrane segment occupies 1478 to 1493 (IIANVVSIVGVIYIIY). Residues 1494–2164 (KLFCTLQGPY…VLEHEWYEKF (671 aa)) are Cytoplasmic-facing. An O-(5'-phospho-RNA)-tyrosine modification is found at Tyr-1503. One can recognise a Peptidase C3 domain in the interval 1522–1700 (GPEEEFGRSL…FSAMLLKSYF (179 aa)). Active-site for protease 3C activity residues include His-1561, Glu-1592, and Cys-1668. The 114-residue stretch at 1932 to 2045 (ECLMAFDYSN…SYNFKLDMAV (114 aa)) folds into the RdRp catalytic domain. The Mg(2+) site is built by Asp-1938 and Asp-2031.

Belongs to the picornaviruses polyprotein family. Interacts with capsid protein VP1 and capsid protein VP3 to form heterotrimeric protomers. In terms of assembly, interacts with capsid protein VP0, and capsid protein VP3 to form heterotrimeric protomers. Five protomers subsequently associate to form pentamers which serve as building blocks for the capsid. Interacts with capsid protein VP2, capsid protein VP3 and capsid protein VP4 following cleavage of capsid protein VP0. As to quaternary structure, interacts with capsid protein VP1 and capsid protein VP3 in the mature capsid. Interacts with capsid protein VP0 and capsid protein VP1 to form heterotrimeric protomers. Five protomers subsequently associate to form pentamers which serve as building blocks for the capsid. Interacts with capsid protein VP4 in the mature capsid. Interacts with protein 2C; this interaction may be important for virion morphogenesis. In terms of assembly, interacts with capsid protein VP1 and capsid protein VP3. As to quaternary structure, homodimer. Homohexamer; forms a hexameric ring structure with 6-fold symmetry characteristic of AAA+ ATPases. Interacts (via N-terminus) with host RTN3 (via reticulon domain); this interaction is important for viral replication. Interacts with capsid protein VP3; this interaction may be important for virion morphogenesis. In terms of assembly, interacts with protein 3CD. As to quaternary structure, homodimer. Interacts with host GBF1. Interacts (via GOLD domain) with host ACBD3 (via GOLD domain); this interaction allows the formation of a viral protein 3A/ACBD3 heterotetramer with a 2:2 stoichiometry, which will stimulate the recruitment of host PI4KB in order to synthesize PI4P at the viral RNA replication sites. Interacts with RNA-directed RNA polymerase. In terms of assembly, interacts with protein 3AB and with RNA-directed RNA polymerase. As to quaternary structure, interacts with Viral protein genome-linked and with protein 3CD. It depends on Mg(2+) as a cofactor. Specific enzymatic cleavages in vivo by the viral proteases yield processing intermediates and the mature proteins. Post-translationally, myristoylation is required for the formation of pentamers during virus assembly. Further assembly of 12 pentamers and a molecule of genomic RNA generates the provirion. In terms of processing, during virion maturation, immature virions are rendered infectious following cleavage of VP0 into VP4 and VP2. This maturation seems to be an autocatalytic event triggered by the presence of RNA in the capsid and it is followed by a conformational change infectious virion. Myristoylation is required during RNA encapsidation and formation of the mature virus particle. Post-translationally, VPg is uridylylated by the polymerase into VPg-pUpU. This acts as a nucleotide-peptide primer for the genomic RNA replication.

The protein localises to the virion. The protein resides in the host cytoplasm. It is found in the host cytoplasmic vesicle membrane. It localises to the host nucleus. The catalysed reaction is a ribonucleoside 5'-triphosphate + H2O = a ribonucleoside 5'-diphosphate + phosphate + H(+). The enzyme catalyses Selective cleavage of Tyr-|-Gly bond in the picornavirus polyprotein.. It catalyses the reaction RNA(n) + a ribonucleoside 5'-triphosphate = RNA(n+1) + diphosphate. It carries out the reaction Selective cleavage of Gln-|-Gly bond in the poliovirus polyprotein. In other picornavirus reactions Glu may be substituted for Gln, and Ser or Thr for Gly.. With respect to regulation, replication or transcription is subject to high level of random mutations by the nucleotide analog ribavirin. Its function is as follows. Forms an icosahedral capsid of pseudo T=3 symmetry with capsid proteins VP2 and VP3. The capsid is 300 Angstroms in diameter, composed of 60 copies of each capsid protein and enclosing the viral positive strand RNA genome. Capsid protein VP1 mainly forms the vertices of the capsid. Capsid protein VP1 interacts with host cell receptor to provide virion attachment to target host cells. This attachment induces virion internalization. Tyrosine kinases are probably involved in the entry process. After binding to its receptor, the capsid undergoes conformational changes. Capsid protein VP1 N-terminus (that contains an amphipathic alpha-helix) and capsid protein VP4 are externalized. Together, they shape a pore in the host membrane through which viral genome is translocated to host cell cytoplasm. Functionally, forms an icosahedral capsid of pseudo T=3 symmetry with capsid proteins VP2 and VP3. The capsid is 300 Angstroms in diameter, composed of 60 copies of each capsid protein and enclosing the viral positive strand RNA genome. In terms of biological role, lies on the inner surface of the capsid shell. After binding to the host receptor, the capsid undergoes conformational changes. Capsid protein VP4 is released, Capsid protein VP1 N-terminus is externalized, and together, they shape a pore in the host membrane through which the viral genome is translocated into the host cell cytoplasm. Component of immature procapsids, which is cleaved into capsid proteins VP4 and VP2 after maturation. Allows the capsid to remain inactive before the maturation step. Its function is as follows. Cysteine protease that cleaves viral polyprotein and specific host proteins. It is responsible for the autocatalytic cleavage between the P1 and P2 regions, which is the first cleavage occurring in the polyprotein. Also cleaves the host translation initiation factor EIF4G1, in order to shut down the capped cellular mRNA translation. Inhibits the host nucleus-cytoplasm protein and RNA trafficking by cleaving host members of the nuclear pores. Counteracts stress granule formation probably by antagonizing its assembly or promoting its dissassembly. Functionally, plays an essential role in the virus replication cycle by acting as a viroporin. Creates a pore in the host endoplasmic reticulum and as a consequence releases Ca2+ in the cytoplasm of infected cell. In turn, high levels of cytoplasmic calcium may trigger membrane trafficking and transport of viral ER-associated proteins to viroplasms, sites of viral genome replication. In terms of biological role, induces and associates with structural rearrangements of intracellular membranes. Displays RNA-binding, nucleotide binding and NTPase activities. May play a role in virion morphogenesis and viral RNA encapsidation by interacting with the capsid protein VP3. Localizes the viral replication complex to the surface of membranous vesicles. Together with protein 3CD binds the Cis-Active RNA Element (CRE) which is involved in RNA synthesis initiation. Acts as a cofactor to stimulate the activity of 3D polymerase, maybe through a nucleid acid chaperone activity. Its function is as follows. Localizes the viral replication complex to the surface of membranous vesicles. It inhibits host cell endoplasmic reticulum-to-Golgi apparatus transport and causes the disassembly of the Golgi complex, possibly through GBF1 interaction. This would result in depletion of MHC, trail receptors and IFN receptors at the host cell surface. Plays an essential role in viral RNA replication by recruiting ACBD3 and PI4KB at the viral replication sites, thereby allowing the formation of the rearranged membranous structures where viral replication takes place. Functionally, acts as a primer for viral RNA replication and remains covalently bound to viral genomic RNA. VPg is uridylylated prior to priming replication into VPg-pUpU. The oriI viral genomic sequence may act as a template for this. The VPg-pUpU is then used as primer on the genomic RNA poly(A) by the RNA-dependent RNA polymerase to replicate the viral genome. During genome replication, the VPg-RNA linkage is removed by the host TDP2, thereby accelerating replication. During the late stage of the replication cycle, host TDP2 is excluded from sites of viral RNA synthesis and encapsidation, allowing for the generation of progeny virions. In terms of biological role, involved in the viral replication complex and viral polypeptide maturation. It exhibits protease activity with a specificity and catalytic efficiency that is different from protease 3C. Protein 3CD lacks polymerase activity. Protein 3CD binds to the 5'UTR of the viral genome. Replicates the viral genomic RNA on the surface of intracellular membranes. May form linear arrays of subunits that propagate along a strong head-to-tail interaction called interface-I. Covalently attaches UMP to a tyrosine of VPg, which is used to prime RNA synthesis. The positive stranded RNA genome is first replicated at virus induced membranous vesicles, creating a dsRNA genomic replication form. This dsRNA is then used as template to synthesize positive stranded RNA genomes. ss(+)RNA genomes are either translated, replicated or encapsidated. Its function is as follows. Major viral protease that mediates proteolytic processing of the polyprotein. Cleaves host EIF5B, contributing to host translation shutoff. Also cleaves host PABPC1, contributing to host translation shutoff. Cleaves host NLRP1, triggers host N-glycine-mediated degradation of the autoinhibitory NLRP1 N-terminal fragment. This chain is Genome polyprotein, found in Human rhinovirus A serotype 89 (strain 41467-Gallo) (HRV-89).